Reading from the N-terminus, the 279-residue chain is MKKEKNFFHLYMVSDATGETLISAGKAVASQYPTIQPIEHIYPMIRNKTQLQRVLDEIQREPGIVLYTIIDQEIKQLLSRECTKIGVPCAAVLDPVLNVFQSYLGTPKNLRVSAQHDLNTDYFRRIEALDFTIEHDDGQSSDDLFNADVILVGISRTSKTPTSIYLANRGIKTANVPLIPGIDLPKALLEEKNSLIIGLIASAERISHVRQNRELGKDVSIERYTDRVNIAEELTYAKRICERFGWPIIDVTRRSIEETAAAVFELLSRFREEKLREIL.

153-160 contacts ADP; the sequence is GISRTSKT.

The protein belongs to the pyruvate, phosphate/water dikinase regulatory protein family. PDRP subfamily.

It carries out the reaction N(tele)-phospho-L-histidyl/L-threonyl-[pyruvate, phosphate dikinase] + ADP = N(tele)-phospho-L-histidyl/O-phospho-L-threonyl-[pyruvate, phosphate dikinase] + AMP + H(+). It catalyses the reaction N(tele)-phospho-L-histidyl/O-phospho-L-threonyl-[pyruvate, phosphate dikinase] + phosphate + H(+) = N(tele)-phospho-L-histidyl/L-threonyl-[pyruvate, phosphate dikinase] + diphosphate. Functionally, bifunctional serine/threonine kinase and phosphorylase involved in the regulation of the pyruvate, phosphate dikinase (PPDK) by catalyzing its phosphorylation/dephosphorylation. The sequence is that of Putative pyruvate, phosphate dikinase regulatory protein from Bartonella bacilliformis (strain ATCC 35685 / KC583 / Herrer 020/F12,63).